The sequence spans 296 residues: Non-homologous end joining protein Ku (296 aa).

Positions 11-187 (TFGLVNIPVK…ELPEAGEPSS (177 aa)) constitute a Ku domain. A disordered region spans residues 254 to 296 (AAARRRGDEHEAPARGERRHAAAAAARTTGRPRAARASRKKRG). The segment covering 258-273 (RRGDEHEAPARGERRH) has biased composition (basic and acidic residues). Low complexity predominate over residues 275–285 (AAAAARTTGRP). Basic residues predominate over residues 286-296 (RAARASRKKRG).

The protein belongs to the prokaryotic Ku family. As to quaternary structure, homodimer. Interacts with LigD.

Functionally, with LigD forms a non-homologous end joining (NHEJ) DNA repair enzyme, which repairs dsDNA breaks with reduced fidelity. Binds linear dsDNA with 5'- and 3'- overhangs but not closed circular dsDNA nor ssDNA. Recruits and stimulates the ligase activity of LigD. This chain is Non-homologous end joining protein Ku, found in Anaeromyxobacter sp. (strain K).